Consider the following 366-residue polypeptide: Mannonate dehydratase (366 aa).

It belongs to the mannonate dehydratase family. Fe(2+) is required as a cofactor. Requires Mn(2+) as cofactor.

The catalysed reaction is D-mannonate = 2-dehydro-3-deoxy-D-gluconate + H2O. It participates in carbohydrate metabolism; pentose and glucuronate interconversion. Catalyzes the dehydration of D-mannonate. This is Mannonate dehydratase from Streptococcus suis (strain 98HAH33).